The chain runs to 212 residues: MRTTTRRAPRVGIGGPVGSGKTMLCLKLCQRLRERLSMAVVTNDIYCSEDAQFLIRQSALPAARIAGVETGGCPHTAIRDDTTMNEQACRALEATFPELDLLLVESGGDNLTATFSPELVDAFIYVIDVAEGDKIPRKGGPAIRFSDLLIINKVDLAPLVGADLEVMARDATAQRGGRPFLLCDLKREHNLDAVIGWLEREVLFARTAAPVG.

Residue 15-22 (GPVGSGKT) participates in GTP binding.

Belongs to the SIMIBI class G3E GTPase family. UreG subfamily. As to quaternary structure, homodimer. UreD, UreF and UreG form a complex that acts as a GTP-hydrolysis-dependent molecular chaperone, activating the urease apoprotein by helping to assemble the nickel containing metallocenter of UreC. The UreE protein probably delivers the nickel.

It is found in the cytoplasm. Its function is as follows. Facilitates the functional incorporation of the urease nickel metallocenter. This process requires GTP hydrolysis, probably effectuated by UreG. The protein is Urease accessory protein UreG of Opitutus terrae (strain DSM 11246 / JCM 15787 / PB90-1).